An 835-amino-acid polypeptide reads, in one-letter code: Ribonucleoside-diphosphate reductase large subunit (835 aa).

Residues 1-39 form a disordered region; that stretch reads MPPRAPRPAGAVSPPFPPLAGPPLKARAPRARDSPLTSP. Substrate-binding positions include Thr262, 277-278, Gly308, 489-493, and 666-670; these read SC, NLCTE, and PTVSS. The cysteines at positions 278 and 506 are disulfide-linked. Catalysis depends on Asn489, which acts as the Proton acceptor. Cys491 functions as the Cysteine radical intermediate in the catalytic mechanism. Catalysis depends on Glu493, which acts as the Proton acceptor.

The protein belongs to the ribonucleoside diphosphate reductase large chain family. As to quaternary structure, heterotetramer composed of a homodimer of the large subunit (R1) and a homodimer of the small subunit (R2). Larger multisubunit protein complex are also active, composed of (R1)n(R2)n.

It catalyses the reaction a 2'-deoxyribonucleoside 5'-diphosphate + [thioredoxin]-disulfide + H2O = a ribonucleoside 5'-diphosphate + [thioredoxin]-dithiol. Functionally, ribonucleoside-diphosphate reductase holoenzyme provides the precursors necessary for viral DNA synthesis. Allows virus growth in non-dividing cells, as well as reactivation from latency in infected hosts. Catalyzes the biosynthesis of deoxyribonucleotides from the corresponding ribonucleotides. This Suid herpesvirus 1 (strain Kaplan) (SuHV-1) protein is Ribonucleoside-diphosphate reductase large subunit.